We begin with the raw amino-acid sequence, 412 residues long: Diphosphomevalonate decarboxylase MVD1, peroxisomal (412 aa).

A (R)-5-diphosphomevalonate-binding site is contributed by 23–26 (YWGK). A Peroxisomal targeting signal PTS2 motif is present at residues 40–48 (SVTLDPDHL). (R)-5-diphosphomevalonate contacts are provided by residues Arg78, 161-166 (SGSACR), and Thr217.

It belongs to the diphosphomevalonate decarboxylase family. Homodimer.

It is found in the peroxisome. It carries out the reaction (R)-5-diphosphomevalonate + ATP = isopentenyl diphosphate + ADP + phosphate + CO2. The protein operates within isoprenoid biosynthesis; isopentenyl diphosphate biosynthesis via mevalonate pathway; isopentenyl diphosphate from (R)-mevalonate: step 3/3. Its function is as follows. Performs the first committed step in the biosynthesis of isoprene-containing compounds such as sterols and terpenoids. Is specific for (R)-5-diphosphomevalonate (MVAPP). The catalytic efficiency with (R)-5-phosphomevalonate (MVAP) as substrate is 10000-fold lower than for MVAPP. Can complement a yeast mutant defective in MVD activity. The chain is Diphosphomevalonate decarboxylase MVD1, peroxisomal from Arabidopsis thaliana (Mouse-ear cress).